We begin with the raw amino-acid sequence, 501 residues long: Sodium-coupled neutral amino acid symporter 2 (501 aa).

A disordered region spans residues 1 to 26 (MSSAEMGKFDISPDEDSSSYSSNSND). Topologically, residues 1 to 77 (MSSAEMGKFD…HPGTTSFGMS (77 aa)) are cytoplasmic. Residues 1-97 (MSSAEMGKFD…SGILGLSYAM (97 aa)) are regulates protein turnover upon amino acid deprivation. A helical transmembrane segment spans residues 78 to 97 (VFNLSNAIVGSGILGLSYAM). A Na(+)-binding site is contributed by N83. Residues 98 to 103 (ANTGIA) lie on the Extracellular side of the membrane. The chain crosses the membrane as a helical span at residues 104-124 (LFVILLLVVSILSLYSVHLLL). Over 125–159 (KTANEGGSLLYEQLGMKAFGMPGKLAASGSITMQN) the chain is Cytoplasmic. A helical membrane pass occupies residues 160–178 (IGAMSSYLFIVKYELPLVI). Topologically, residues 179 to 189 (KTFMNIEENAG) are extracellular. The chain crosses the membrane as a helical span at residues 190-210 (HWYLNGDYLVLLVSVILILPL). At 211–218 (SLLKNLGY) the chain is on the cytoplasmic side. Residues 219–239 (LGYTSGFSLLCMVFFLIVVIW) form a helical membrane-spanning segment. The Extracellular portion of the chain corresponds to 240–287 (KMFQIPCPMESDIINATLINATLAPFADENITISDACKPEYFIFNSQT). The cysteines at positions 246 and 276 are disulfide-linked. 2 N-linked (GlcNAc...) asparagine glycosylation sites follow: N254 and N259. Residues 288-308 (VYAVPILTFSFVCHPAILPIY) form a helical membrane-spanning segment. The Cytoplasmic portion of the chain corresponds to 309 to 324 (EELKSRSRKRMMNVSY). The helical transmembrane segment at 325-345 (VSFFAMFLMYLLAALFGYLTF) threads the bilayer. Residues 346-366 (YGRVESELLHTYSAFLGADIL) lie on the Extracellular side of the membrane. The helical transmembrane segment at 367–387 (LLIVRLAVLMAVTLTVPVVIF) threads the bilayer. A Na(+)-binding site is contributed by T381. The Cytoplasmic portion of the chain corresponds to 388–408 (PIRSSVTQLLWAGKEFSWWRH). A helical membrane pass occupies residues 409-429 (CSITVVLLAFTNVLVIFVPTI). Residues 430–431 (RD) lie on the Extracellular side of the membrane. Residues 432–452 (IFGFIGASAAAMLIFILPSAF) form a helical membrane-spanning segment. Topologically, residues 453-467 (YIKLVKKEPMKSVQK) are cytoplasmic. A helical membrane pass occupies residues 468–490 (IGAALFFLSGILVMTGCMTLIIL). The Extracellular segment spans residues 491 to 501 (DWIHTDASDGH).

The protein belongs to the amino acid/polyamine transporter 2 family.

It localises to the cell membrane. It catalyses the reaction L-alanine(in) + Na(+)(in) = L-alanine(out) + Na(+)(out). The catalysed reaction is glycine(in) + Na(+)(in) = glycine(out) + Na(+)(out). The enzyme catalyses L-serine(in) + Na(+)(in) = L-serine(out) + Na(+)(out). It carries out the reaction L-proline(in) + Na(+)(in) = L-proline(out) + Na(+)(out). It catalyses the reaction L-methionine(in) + Na(+)(in) = L-methionine(out) + Na(+)(out). The catalysed reaction is L-histidine(in) + Na(+)(in) = L-histidine(out) + Na(+)(out). The enzyme catalyses L-asparagine(in) + Na(+)(in) = L-asparagine(out) + Na(+)(out). It carries out the reaction L-glutamine(in) + Na(+)(in) = L-glutamine(out) + Na(+)(out). It catalyses the reaction L-threonine(in) + Na(+)(in) = L-threonine(out) + Na(+)(out). The catalysed reaction is L-leucine(in) + Na(+)(in) = L-leucine(out) + Na(+)(out). The enzyme catalyses L-phenylalanine(in) + Na(+)(in) = L-phenylalanine(out) + Na(+)(out). Inhibited by N-methyl-D-glucamine. Inhibited by choline. Allosteric regulation of sodium ions binding by pH. Symporter that cotransports neutral amino acids and sodium ions from the extracellular to the intracellular side of the cell membrane. The transport is pH-sensitive, Li(+)-intolerant, electrogenic, driven by the Na(+) electrochemical gradient and cotransports of neutral amino acids and sodium ions with a stoichiometry of 1:1. In Gallus gallus (Chicken), this protein is Sodium-coupled neutral amino acid symporter 2.